Reading from the N-terminus, the 118-residue chain is Ribosome-binding factor A (118 aa).

The protein belongs to the RbfA family. Monomer. Binds 30S ribosomal subunits, but not 50S ribosomal subunits or 70S ribosomes.

It localises to the cytoplasm. Its function is as follows. One of several proteins that assist in the late maturation steps of the functional core of the 30S ribosomal subunit. Associates with free 30S ribosomal subunits (but not with 30S subunits that are part of 70S ribosomes or polysomes). Required for efficient processing of 16S rRNA. May interact with the 5'-terminal helix region of 16S rRNA. The sequence is that of Ribosome-binding factor A from Bacillus thuringiensis (strain Al Hakam).